We begin with the raw amino-acid sequence, 192 residues long: UPF0149 protein YPO0911/y3298/YP_3608 (192 aa).

This sequence belongs to the UPF0149 family.

The sequence is that of UPF0149 protein YPO0911/y3298/YP_3608 from Yersinia pestis.